A 394-amino-acid chain; its full sequence is Elongation factor Tu (394 aa).

One can recognise a tr-type G domain in the interval 10–204 (KPHVNVGTIG…AVDEWIPTPE (195 aa)). Residues 19–26 (GHIDHGKT) are G1. A GTP-binding site is contributed by 19-26 (GHIDHGKT). Thr-26 lines the Mg(2+) pocket. A G2 region spans residues 60-64 (GITIN). Positions 81-84 (DCPG) are G3. Residues 81–85 (DCPGH) and 136–139 (NKCD) each bind GTP. The tract at residues 136-139 (NKCD) is G4. Residues 174-176 (SAL) are G5.

This sequence belongs to the TRAFAC class translation factor GTPase superfamily. Classic translation factor GTPase family. EF-Tu/EF-1A subfamily. In terms of assembly, monomer.

The protein resides in the cytoplasm. The catalysed reaction is GTP + H2O = GDP + phosphate + H(+). Its function is as follows. GTP hydrolase that promotes the GTP-dependent binding of aminoacyl-tRNA to the A-site of ribosomes during protein biosynthesis. The sequence is that of Elongation factor Tu from Mycoplasma pneumoniae (strain ATCC 29342 / M129 / Subtype 1) (Mycoplasmoides pneumoniae).